The primary structure comprises 406 residues: Cysteine desulfurase (406 aa).

Lys226 is modified (N6-(pyridoxal phosphate)lysine). Cys364 functions as the Cysteine persulfide intermediate in the catalytic mechanism.

It belongs to the class-V pyridoxal-phosphate-dependent aminotransferase family. Csd subfamily. In terms of assembly, homodimer. Interacts with SufE and the SufBCD complex composed of SufB, SufC and SufD. The interaction with SufE is required to mediate the direct transfer of the sulfur atom from the S-sulfanylcysteine. The cofactor is pyridoxal 5'-phosphate.

It localises to the cytoplasm. The enzyme catalyses (sulfur carrier)-H + L-cysteine = (sulfur carrier)-SH + L-alanine. The catalysed reaction is L-selenocysteine + AH2 = hydrogenselenide + L-alanine + A + H(+). The protein operates within cofactor biosynthesis; iron-sulfur cluster biosynthesis. Cysteine desulfurases mobilize the sulfur from L-cysteine to yield L-alanine, an essential step in sulfur metabolism for biosynthesis of a variety of sulfur-containing biomolecules. Component of the suf operon, which is activated and required under specific conditions such as oxidative stress and iron limitation. Acts as a potent selenocysteine lyase in vitro, that mobilizes selenium from L-selenocysteine. Selenocysteine lyase activity is however unsure in vivo. The polypeptide is Cysteine desulfurase (Salmonella heidelberg (strain SL476)).